We begin with the raw amino-acid sequence, 391 residues long: tRNA-specific 2-thiouridylase MnmA (391 aa).

ATP is bound by residues 9 to 16 (GMSGGVDS) and Met35. The segment at 95 to 97 (NPD) is interaction with target base in tRNA. The active-site Nucleophile is Cys100. Cys100 and Cys196 are oxidised to a cystine. ATP is bound at residue Gly124. The interaction with tRNA stretch occupies residues 146-148 (KDQ). Catalysis depends on Cys196, which acts as the Cysteine persulfide intermediate. The tract at residues 308–309 (RY) is interaction with tRNA.

Belongs to the MnmA/TRMU family.

The protein resides in the cytoplasm. It catalyses the reaction S-sulfanyl-L-cysteinyl-[protein] + uridine(34) in tRNA + AH2 + ATP = 2-thiouridine(34) in tRNA + L-cysteinyl-[protein] + A + AMP + diphosphate + H(+). Its function is as follows. Catalyzes the 2-thiolation of uridine at the wobble position (U34) of tRNA, leading to the formation of s(2)U34. In Burkholderia cenocepacia (strain HI2424), this protein is tRNA-specific 2-thiouridylase MnmA.